The chain runs to 487 residues: Variant surface glycoprotein WRATAT B (487 aa).

Positions 1 to 19 are cleaved as a signal peptide; the sequence is MWIILALLTLAGSRVAHGA. N-linked (GlcNAc...) asparagine glycosylation is found at Asn-71, Asn-84, Asn-418, and Asn-465. Residues 443-468 are disordered; sequence KPKAGTEAATTGPGERDAGATANTTG. Ser-470 carries GPI-anchor amidated serine lipidation. The propeptide at 471-487 is removed in mature form; that stretch reads NSFVIKTSPLLFAFLLF.

It is found in the cell membrane. Its function is as follows. VSG forms a coat on the surface of the parasite. The trypanosome evades the immune response of the host by expressing a series of antigenically distinct VSGs from an estimated 1000 VSG genes. This chain is Variant surface glycoprotein WRATAT B, found in Trypanosoma brucei rhodesiense.